A 419-amino-acid chain; its full sequence is Glutamyl-tRNA reductase (419 aa).

Substrate contacts are provided by residues 49–52, Ser107, 112–114, and Gln118; these read TCNR and EPQ. The active-site Nucleophile is Cys50. 187-192 is a binding site for NADP(+); the sequence is GAGETI.

This sequence belongs to the glutamyl-tRNA reductase family. Homodimer.

It carries out the reaction (S)-4-amino-5-oxopentanoate + tRNA(Glu) + NADP(+) = L-glutamyl-tRNA(Glu) + NADPH + H(+). Its pathway is porphyrin-containing compound metabolism; protoporphyrin-IX biosynthesis; 5-aminolevulinate from L-glutamyl-tRNA(Glu): step 1/2. Its function is as follows. Catalyzes the NADPH-dependent reduction of glutamyl-tRNA(Glu) to glutamate 1-semialdehyde (GSA). The chain is Glutamyl-tRNA reductase from Vibrio vulnificus (strain CMCP6).